A 149-amino-acid polypeptide reads, in one-letter code: MWYYLIAAVIIALDQFTKYLIVKYMELGESIPLIADVFHLTSHRNMGAAFGILQNRRWFFIAITAVVVIGIVISLIRLGKKQPRASLALSFVLGGAVGNFIDRAMSGQVVDFLDFTLIHFPIFNVADMAITIGVGILLLDVFLDGKKNR.

2 helical membrane-spanning segments follow: residues tryptophan 58–leucine 78 and alanine 85–methionine 105. Catalysis depends on residues aspartate 111 and aspartate 127. Residues isoleucine 122 to phenylalanine 142 form a helical membrane-spanning segment.

This sequence belongs to the peptidase A8 family.

It is found in the cell membrane. It carries out the reaction Release of signal peptides from bacterial membrane prolipoproteins. Hydrolyzes -Xaa-Yaa-Zaa-|-(S,diacylglyceryl)Cys-, in which Xaa is hydrophobic (preferably Leu), and Yaa (Ala or Ser) and Zaa (Gly or Ala) have small, neutral side chains.. Its pathway is protein modification; lipoprotein biosynthesis (signal peptide cleavage). Its function is as follows. This protein specifically catalyzes the removal of signal peptides from prolipoproteins. The polypeptide is Lipoprotein signal peptidase (Brevibacillus brevis (strain 47 / JCM 6285 / NBRC 100599)).